The primary structure comprises 259 residues: Global transcriptional regulator CodY (259 aa).

The tract at residues 1 to 155 (MTLLEKTRKI…GGTVVGMEIL (155 aa)) is GAF domain. Residues 203 to 222 (ASKIADRVGITRSVIVNALR) constitute a DNA-binding region (H-T-H motif).

The protein belongs to the CodY family.

The protein localises to the cytoplasm. DNA-binding global transcriptional regulator which is involved in the adaptive response to starvation and acts by directly or indirectly controlling the expression of numerous genes in response to nutrient availability. During rapid exponential growth, CodY is highly active and represses genes whose products allow adaptation to nutrient depletion. The polypeptide is Global transcriptional regulator CodY (Listeria monocytogenes serotype 4b (strain CLIP80459)).